We begin with the raw amino-acid sequence, 131 residues long: Profilin-3 (131 aa).

Cysteines 13 and 115 form a disulfide. Positions 81–97 match the Involved in PIP2 interaction motif; that stretch reads AVIRGKKGSGGITIKKT. Threonine 111 bears the Phosphothreonine mark.

Belongs to the profilin family. In terms of assembly, occurs in many kinds of cells as a complex with monomeric actin in a 1:1 ratio. In terms of processing, phosphorylated by MAP kinases.

The protein resides in the cytoplasm. It localises to the cytoskeleton. Binds to actin and affects the structure of the cytoskeleton. At high concentrations, profilin prevents the polymerization of actin, whereas it enhances it at low concentrations. This Olea europaea (Common olive) protein is Profilin-3.